The sequence spans 403 residues: Coenzyme A biosynthesis bifunctional protein CoaBC (403 aa).

The segment at 1 to 197 (MISEIMHPTK…GNNLKKEGNR (197 aa)) is phosphopantothenoylcysteine decarboxylase. The interval 198–403 (VLILNGGTVE…VEKVKKLVKS (206 aa)) is phosphopantothenate--cysteine ligase. CTP contacts are provided by Asp285, Lys294, and Phe327.

This sequence in the N-terminal section; belongs to the HFCD (homo-oligomeric flavin containing Cys decarboxylase) superfamily. In the C-terminal section; belongs to the PPC synthetase family. As to quaternary structure, homododecamer. The CoaC domain is responsible for dodecamer formation. Mg(2+) serves as cofactor. The cofactor is FMN.

It carries out the reaction N-[(R)-4-phosphopantothenoyl]-L-cysteine + H(+) = (R)-4'-phosphopantetheine + CO2. The enzyme catalyses (R)-4'-phosphopantothenate + L-cysteine + CTP = N-[(R)-4-phosphopantothenoyl]-L-cysteine + CMP + diphosphate + H(+). It functions in the pathway cofactor biosynthesis; coenzyme A biosynthesis. Catalyzes two sequential steps in the biosynthesis of coenzyme A. In the first step cysteine is conjugated to 4'-phosphopantothenate to form 4-phosphopantothenoylcysteine. In the second step the latter compound is decarboxylated to form 4'-phosphopantotheine. The chain is Coenzyme A biosynthesis bifunctional protein CoaBC from Methanocaldococcus jannaschii (strain ATCC 43067 / DSM 2661 / JAL-1 / JCM 10045 / NBRC 100440) (Methanococcus jannaschii).